The sequence spans 286 residues: uncharacterized protein (286 aa).

The Radical SAM core domain occupies 2-221 (VDGMKHLILK…PIYIKNLQKR (220 aa)). Positions 16, 20, and 23 each coordinate [4Fe-4S] cluster.

The protein belongs to the radical SAM superfamily. Anaerobic sulfatase-maturating enzyme family. [4Fe-4S] cluster is required as a cofactor.

This is an uncharacterized protein from Methanocaldococcus jannaschii (strain ATCC 43067 / DSM 2661 / JAL-1 / JCM 10045 / NBRC 100440) (Methanococcus jannaschii).